The sequence spans 474 residues: ATP synthase subunit beta (474 aa).

158 to 165 (GGAGVGKT) serves as a coordination point for ATP.

This sequence belongs to the ATPase alpha/beta chains family. F-type ATPases have 2 components, CF(1) - the catalytic core - and CF(0) - the membrane proton channel. CF(1) has five subunits: alpha(3), beta(3), gamma(1), delta(1), epsilon(1). CF(0) has three main subunits: a(1), b(2) and c(9-12). The alpha and beta chains form an alternating ring which encloses part of the gamma chain. CF(1) is attached to CF(0) by a central stalk formed by the gamma and epsilon chains, while a peripheral stalk is formed by the delta and b chains.

It is found in the cell membrane. It carries out the reaction ATP + H2O + 4 H(+)(in) = ADP + phosphate + 5 H(+)(out). Functionally, produces ATP from ADP in the presence of a proton gradient across the membrane. The catalytic sites are hosted primarily by the beta subunits. The sequence is that of ATP synthase subunit beta from Tropheryma whipplei (strain Twist) (Whipple's bacillus).